The chain runs to 475 residues: Mitochondrial adenyl nucleotide antiporter SLC25A24 (475 aa).

The tract at residues 1–173 is regulatory N-terminal domain; that stretch reads MLRWLRGFVL…RFWKHSTGID (173 aa). The Mitochondrial intermembrane segment spans residues 1–197; sequence MLRWLRGFVL…ERKSGQWWRQ (197 aa). EF-hand domains follow at residues 19–54, 55–88, 86–121, and 122–157; these read EPPT…LGIP, LGQD…KDHE, DHEK…LGLT, and ISEQ…NPVA. Ca(2+) contacts are provided by aspartate 32, asparagine 34, aspartate 36, valine 38, glutamate 43, aspartate 68, asparagine 70, aspartate 72, lysine 74, glutamate 79, aspartate 99, asparagine 101, aspartate 103, lysine 105, glutamate 110, aspartate 135, aspartate 137, threonine 139, threonine 141, and glutamate 146. The interval 159-168 is linker region; sequence IEEIIRFWKH. Residues 174–475 are C-terminal transmembrane transporter domain; the sequence is IGDSLTIPDE…MKQTLGVTQK (302 aa). 3 Solcar repeats span residues 192-276, 284-369, and 381-469; these read GQWW…YKKL, IGTF…LKSH, and PGVL…MKQT. A helical membrane pass occupies residues 198–215; sequence LLAGGIAGAVSRTSTAPL. Residues 216-250 are Mitochondrial matrix-facing; it reads DRLKVMMQVHGSKSMNIFGGFRQMIKEGGVRSLWR. Residues 251 to 270 form a helical membrane-spanning segment; it reads GNGTNVIKIAPETAVKFWVY. Residues 271 to 293 lie on the Mitochondrial intermembrane side of the membrane; sequence EQYKKLLTEEGQKIGTFERFISG. A helical membrane pass occupies residues 294-307; it reads SMAGATAQTFIYPM. The Mitochondrial matrix segment spans residues 308-343; it reads EVMKTRLAVGKTGQYSGIYDCAKKILKYEGFGAFYK. An N6-acetyllysine; alternate modification is found at lysine 318. Lysine 318 is modified (N6-succinyllysine; alternate). Lysine 334 is modified (N6-acetyllysine). A helical membrane pass occupies residues 344–363; the sequence is GYVPNLLGIIPYAGIDLAVY. Topologically, residues 364 to 386 are mitochondrial intermembrane; sequence ELLKSHWLDNFAKDSVNPGVLVL. A helical membrane pass occupies residues 387–404; it reads LGCGALSSTCGQLASYPL. The Mitochondrial matrix portion of the chain corresponds to 405–443; the sequence is ALVRTRMQAQAMLEGAPQLNMVGLFRRIISKEGLPGLYR. The residue at position 435 (lysine 435) is an N6-acetyllysine; alternate. Lysine 435 carries the N6-succinyllysine; alternate modification. Residues 444 to 463 form a helical membrane-spanning segment; sequence GITPNFMKVLPAVGISYVVY. Residues 464–475 lie on the Mitochondrial intermembrane side of the membrane; that stretch reads ENMKQTLGVTQK.

Belongs to the mitochondrial carrier (TC 2.A.29) family. Monomer. As to expression, mainly expressed in colon. Also expressed in the small intestine proximal to the ileum. Weakly expressed in kidney but not in the liver.

The protein resides in the mitochondrion inner membrane. Its subcellular location is the peroxisome membrane. The enzyme catalyses Mg(2+)(out) + phosphate(in) + ATP(out) = Mg(2+)(in) + phosphate(out) + ATP(in). It carries out the reaction ADP(out) + phosphate(in) + H(+)(out) = ADP(in) + phosphate(out) + H(+)(in). The catalysed reaction is AMP(out) + phosphate(in) = AMP(in) + phosphate(out). It catalyses the reaction phosphate(in) + ATP(out) + 2 H(+)(out) = phosphate(out) + ATP(in) + 2 H(+)(in). The enzyme catalyses dADP(in) + ADP(out) = dADP(out) + ADP(in). It carries out the reaction Mg(2+)(in) + ADP(out) + ATP(in) + H(+)(out) = Mg(2+)(out) + ADP(in) + ATP(out) + H(+)(in). The catalysed reaction is ADP(out) + diphosphate(in) = ADP(in) + diphosphate(out). It catalyses the reaction dAMP(in) + ADP(out) + H(+)(out) = dAMP(out) + ADP(in) + H(+)(in). The enzyme catalyses 3'-AMP(in) + ADP(out) + H(+)(out) = 3'-AMP(out) + ADP(in) + H(+)(in). It carries out the reaction dAMP(out) + phosphate(in) = dAMP(in) + phosphate(out). The catalysed reaction is 3'-AMP(out) + phosphate(in) = 3'-AMP(in) + phosphate(out). It catalyses the reaction dADP(out) + phosphate(in) + H(+)(out) = dADP(in) + phosphate(out) + H(+)(in). Activated by an increase in cytosolic calcium levels that induce a conformational change of the N-terminal regulatory domain, uncapping the channel and allowing transport. Inhibited by bathophenanthroline, mersalyl, p-hydroxymercuribenzoate, bromcresol purple and tannic acid. Electroneutral antiporter that mediates the transport of adenyl nucleotides through the inner mitochondrial membrane. Originally identified as an ATP-magnesium/inorganic phosphate antiporter, it also acts as a broad specificity adenyl nucleotide antiporter. By regulating the mitochondrial matrix adenyl nucleotide pool could adapt to changing cellular energetic demands and indirectly regulate adenyl nucleotide-dependent metabolic pathways. In vitro, a low activity is also observed with guanyl and pyrimidine nucleotides. May play a role in protecting cells against oxidative stress-induced cell death, by buffering calcium levels in the mitochondrial matrix through the formation of calcium-phosphate precipitates. This chain is Mitochondrial adenyl nucleotide antiporter SLC25A24 (SLC25A24), found in Oryctolagus cuniculus (Rabbit).